The sequence spans 155 residues: Ribosomal RNA large subunit methyltransferase H (155 aa).

S-adenosyl-L-methionine is bound by residues leucine 73, glycine 104, and 123–128 (LSPLTL).

The protein belongs to the RNA methyltransferase RlmH family. As to quaternary structure, homodimer.

Its subcellular location is the cytoplasm. It carries out the reaction pseudouridine(1915) in 23S rRNA + S-adenosyl-L-methionine = N(3)-methylpseudouridine(1915) in 23S rRNA + S-adenosyl-L-homocysteine + H(+). Functionally, specifically methylates the pseudouridine at position 1915 (m3Psi1915) in 23S rRNA. The protein is Ribosomal RNA large subunit methyltransferase H of Pseudomonas putida (strain GB-1).